The sequence spans 226 residues: UPF0173 metal-dependent hydrolase Msed_2125 (226 aa).

Belongs to the UPF0173 family.

The chain is UPF0173 metal-dependent hydrolase Msed_2125 from Metallosphaera sedula (strain ATCC 51363 / DSM 5348 / JCM 9185 / NBRC 15509 / TH2).